Consider the following 361-residue polypeptide: Replication factor C subunit 3 (361 aa).

Positions 1–28 are enriched in low complexity; the sequence is MAGATAATPMDIDAAAPPPGAAAKGKAP. Residues 1-39 form a disordered region; that stretch reads MAGATAATPMDIDAAAPPPGAAAKGKAPLSSTPGGRAAP. 77-84 is a binding site for ATP; that stretch reads YGPPGTGK.

The protein belongs to the activator 1 small subunits family. Heterotetramer of subunits RFC2, RFC3, RFC4 and RFC5 that can form a complex with RFC1. Expressed in roots, leaves, shoot apical meristem (SAM), flag leaves and panicles.

The protein localises to the nucleus. In terms of biological role, may be involved in DNA replication and thus regulate cell proliferation. The sequence is that of Replication factor C subunit 3 (RFC3) from Oryza sativa subsp. japonica (Rice).